We begin with the raw amino-acid sequence, 117 residues long: Basic phospholipase A2 pseudexin B chain (117 aa).

Disulfide bonds link Cys-11/Cys-71, Cys-27/Cys-117, Cys-29/Cys-45, Cys-44/Cys-98, Cys-51/Cys-91, Cys-60/Cys-84, and Cys-78/Cys-89. Tyr-28, Gly-30, and Gly-32 together coordinate Ca(2+). Residue His-48 is part of the active site. Asp-49 is a Ca(2+) binding site. Asp-92 is a catalytic residue.

It belongs to the phospholipase A2 family. Group I subfamily. D49 sub-subfamily. Ca(2+) is required as a cofactor. Expressed by the venom gland.

The protein resides in the secreted. It carries out the reaction a 1,2-diacyl-sn-glycero-3-phosphocholine + H2O = a 1-acyl-sn-glycero-3-phosphocholine + a fatty acid + H(+). PLA2 catalyzes the calcium-dependent hydrolysis of the 2-acyl groups in 3-sn-phosphoglycerides. The protein is Basic phospholipase A2 pseudexin B chain of Pseudechis porphyriacus (Red-bellied black snake).